Here is a 525-residue protein sequence, read N- to C-terminus: MTENIHKHRILILDFGSQYTQLVARRVRELGVYCELWAWDVTEAQIREFNPSGIILSGGPESTTEENSPRAPQYVFEAGVPVFGVCYGMQTMAMQLGGHVEGSNEREFGYAQVEVVNDSALVRGIEDSLTADGKPLLDVWMSHGDKVTAIPADFVTVASTDNCPFAIMANEEKRFYGVQFHPEVTHTRQGMRMLERFVRDICQCEALWTPAKIIDDAVERIRQQVGDDKVILGLSGGVDSSVTAMLLHRAIGKNLTCVFVDNGLLRLNEAQQVMEMFGDHFGLNIVHVEGEQRFLDALAGESDPEAKRKIIGRVFVEVFDEEALKLDDVKWLAQGTIYPDVIESAASATGKAHVIKSHHNVGGLPKEMKMGLVEPLRELFKDEVRKIGLELGLPYDMLYRHPFPGPGLGVRVLGEVKKEYCDLLRRADAIFIEELHKADLYNKVSQAFTVFLPVRSVGVMGDGRKYDWVVSLRAVETIDFMTAHWAHLPYDFLGRVSNRIINEVNGISRVVYDISGKPPATIEWE.

Residues 9-207 enclose the Glutamine amidotransferase type-1 domain; that stretch reads RILILDFGSQ…VRDICQCEAL (199 aa). C86 acts as the Nucleophile in catalysis. Residues H181 and E183 contribute to the active site. In terms of domain architecture, GMPS ATP-PPase spans 208 to 400; that stretch reads WTPAKIIDDA…LGLPYDMLYR (193 aa). An ATP-binding site is contributed by 235–241; it reads SGGVDSS.

As to quaternary structure, homodimer.

The enzyme catalyses XMP + L-glutamine + ATP + H2O = GMP + L-glutamate + AMP + diphosphate + 2 H(+). Its pathway is purine metabolism; GMP biosynthesis; GMP from XMP (L-Gln route): step 1/1. Its function is as follows. Catalyzes the synthesis of GMP from XMP. In Klebsiella pneumoniae subsp. pneumoniae (strain ATCC 700721 / MGH 78578), this protein is GMP synthase [glutamine-hydrolyzing].